Here is a 156-residue protein sequence, read N- to C-terminus: Snaclec jerdonibitin subunit alpha (156 aa).

An N-terminal signal peptide occupies residues 1–23 (MGRFIFVSFGLLVVFLSLSGTGA). Disulfide bonds link cysteine 25/cysteine 36, cysteine 53/cysteine 150, and cysteine 125/cysteine 142. The C-type lectin domain maps to 32–151 (FRQYCYRVFK…CGQQHLFMCK (120 aa)).

It belongs to the snaclec family. As to quaternary structure, heterodimer of subunits alpha and beta; disulfide-linked. Expressed by the venom gland.

The protein resides in the secreted. Its function is as follows. Snaclec that dose-dependently inhibits platelet aggregation induced by ristocetin or low-dose thrombin, but not by high-dose thrombin. Binds to GPIbalpha (GP1BA). In vivo, also dose-dependently induces thrombocytopenia of mice and platelet counts remains at very low level even after 18 hours intravenous injection. In Protobothrops jerdonii (Jerdon's pitviper), this protein is Snaclec jerdonibitin subunit alpha.